Consider the following 74-residue polypeptide: MKTGMIICLLLIAFMDADGSPGDTLYSQKTADTDSGMKRFQKTFQKRRCVFCPKEPCCDGDQCMTAPGTGPFCG.

A signal peptide spans 1 to 19 (MKTGMIICLLLIAFMDADG). The propeptide occupies 20–47 (SPGDTLYSQKTADTDSGMKRFQKTFQKR). Disulfide bonds link C49–C58, C52–C63, and C57–C73.

As to expression, expressed by the venom duct.

The protein localises to the secreted. Functionally, probable neurotoxin. The protein is Conotoxin Im6.10 of Conus imperialis (Imperial cone).